The primary structure comprises 549 residues: Glucose-6-phosphate isomerase (549 aa).

Catalysis depends on Glu355, which acts as the Proton donor. Catalysis depends on residues His386 and Lys514.

This sequence belongs to the GPI family.

It is found in the cytoplasm. It catalyses the reaction alpha-D-glucose 6-phosphate = beta-D-fructose 6-phosphate. Its pathway is carbohydrate biosynthesis; gluconeogenesis. It functions in the pathway carbohydrate degradation; glycolysis; D-glyceraldehyde 3-phosphate and glycerone phosphate from D-glucose: step 2/4. Its function is as follows. Catalyzes the reversible isomerization of glucose-6-phosphate to fructose-6-phosphate. The polypeptide is Glucose-6-phosphate isomerase (Klebsiella pneumoniae subsp. pneumoniae (strain ATCC 700721 / MGH 78578)).